Consider the following 309-residue polypeptide: UDP-N-acetylenolpyruvoylglucosamine reductase (309 aa).

The FAD-binding PCMH-type domain occupies 34–199; sequence RVGGPAQVLF…TSARLRGTPA (166 aa). Arginine 179 is an active-site residue. Serine 228 (proton donor) is an active-site residue. Glutamate 298 is a catalytic residue.

The protein belongs to the MurB family. The cofactor is FAD.

The protein resides in the cytoplasm. The catalysed reaction is UDP-N-acetyl-alpha-D-muramate + NADP(+) = UDP-N-acetyl-3-O-(1-carboxyvinyl)-alpha-D-glucosamine + NADPH + H(+). It functions in the pathway cell wall biogenesis; peptidoglycan biosynthesis. Its function is as follows. Cell wall formation. The sequence is that of UDP-N-acetylenolpyruvoylglucosamine reductase from Rhodopseudomonas palustris (strain ATCC BAA-98 / CGA009).